The chain runs to 522 residues: Protein tweety homolog 3 (522 aa).

The Extracellular portion of the chain corresponds to 1 to 43 (MAAAISYTPPWWVNLLHRLPHLNLQWESLNGDFRPEDPDYQQS). A helical membrane pass occupies residues 44–64 (LMLLACVALSCLALDLLFLLF). At 65-87 (YSFWFCCRHRKTEENTNADCCCT) the chain is on the cytoplasmic side. The chain crosses the membrane as a helical span at residues 88-108 (VWCVIVATLVCSAGIAVGFYG). The Extracellular segment spans residues 109–211 (NGETSDGIHR…VDLFDWYRWL (103 aa)). Residues glutamate 111 and aspartate 114 each contribute to the Ca(2+) site. N-linked (GlcNAc...) asparagine glycosylation is found at asparagine 127 and asparagine 145. A helical membrane pass occupies residues 212–232 (GYLGLLLFHVFICLLVLFGLI). Residues 233-238 (RNSKGT) are Cytoplasmic-facing. The helical transmembrane segment at 239–259 (LICVCFLGMMALIISWASMGL) threads the bilayer. Over 260-386 (ELAVAVGSSD…LTGFCYDGVE (127 aa)) the chain is Extracellular. Cystine bridges form between cysteine 271-cysteine 381 and cysteine 299-cysteine 366. Residue asparagine 351 is glycosylated (N-linked (GlcNAc...) asparagine). The chain crosses the membrane as a helical span at residues 387–407 (GLIYLVLFSFVTALMFSSIVC). Residues 408 to 522 (SVPHTWQQRR…TNRPETDPVH (115 aa)) lie on the Cytoplasmic side of the membrane. The segment at 483-522 (QNPRCENTPLIGRESPPPSYTSSMRAKYLATNRPETDPVH) is disordered.

The protein belongs to the tweety family. Homotetramer; disulfide-linked. Forms cis-homodimers in the presence of Ca(2+).

The protein resides in the cell membrane. It carries out the reaction chloride(in) = chloride(out). It catalyses the reaction L-glutamate(out) = L-glutamate(in). Its function is as follows. May act as a calcium-independent, swelling-dependent volume-regulated anion channel (VRAC-swell) which plays a pivotal role in the process of regulatory volume decrease (RVD) in the brain through the efflux of anions like chloride and organic osmolytes like glutamate. Probable large-conductance Ca(2+)-activated chloride channel. In Xenopus laevis (African clawed frog), this protein is Protein tweety homolog 3 (ttyh3).